The chain runs to 144 residues: Protein D (144 aa).

The sequence is that of Protein D (D) from Escherichia coli.